A 343-amino-acid chain; its full sequence is Anthranilate 1,2-dioxygenase electron transfer component (343 aa).

One can recognise a 2Fe-2S ferredoxin-type domain in the interval 3–96; that stretch reads HSVALNFADG…NAAFYFDHHS (94 aa). 4 residues coordinate [2Fe-2S] cluster: C40, C45, C48, and C80. The ferredoxin-reductase stretch occupies residues 98–338; it reads ICNAGETLKI…HIYSEKFLQS (241 aa). Residues 103 to 206 enclose the FAD-binding FR-type domain; sequence ETLKIATVVT…EAPLGSFYLR (104 aa).

This sequence belongs to the bacterial ring-hydroxylating dioxygenase ferredoxin reductase family. In terms of assembly, monomer. It is part of the anthranilate dioxygenase two component enzyme system. The other component is an oxygenase component consisting of 3 large (AntA) and 3 small (AntB) subunits. Requires FAD as cofactor. [2Fe-2S] cluster serves as cofactor.

It carries out the reaction 2 reduced [2Fe-2S]-[ferredoxin] + NAD(+) + H(+) = 2 oxidized [2Fe-2S]-[ferredoxin] + NADH. It participates in aromatic compound metabolism; anthranilate degradation via hydroxylation; catechol from anthranilate: step 1/1. Electron transfer component of anthranilate 1,2-dioxygenase system. In Acinetobacter baylyi (strain ATCC 33305 / BD413 / ADP1), this protein is Anthranilate 1,2-dioxygenase electron transfer component.